Reading from the N-terminus, the 521-residue chain is MVLMILPFVGPVSVSESLVAIITMCLVYMILKFFRTEIPEGLCQLPGPKPLPIIGNVLEVGRNPYLSLTAMSKRYGDVFQIQIGMRPVVVLSGSETVRQALIKQGDDFAGRPDLYSFRFINDGKSLAFSTDQAGVWRARRKLAYSALRSFSTLEGTTPEYSCALEEHVSKEAEYLVKQLNTVMETDGSFDPFRHIVVSVANVICGMCFGRRYDHNNQELLNLVNLSDEFGQVVASGNPADFIPILQYLPSTSMKKFVSINDRFNAFVQKIVSEHYTTFDKDNIRDITDSLIDHCEDRKLDENSNVQMSDEKVVGIVNDLFGAGFDTISTALSWSVMYLVAYPEIQERLYQEMKESVGLDRTPCLSDKPKLPFLEAFILEIFRHSSFLPFTIPHCSSKDTSLNGYFIPKDTCVFINQWQINHDPELWKDPSSFNPDRFLNTDGTELNKLEGEKMMVFGLGKRRCIGEVIARNEVFLFLAILVQNLRFHAKPGEPLDMTPEYGLTMKHKRCHLRAAMRSRNEE.

Substrate is bound at residue F229. Residue C463 participates in heme binding.

The protein belongs to the cytochrome P450 family. Heme is required as a cofactor.

The protein resides in the endoplasmic reticulum membrane. It is found in the microsome membrane. The catalysed reaction is an organic molecule + reduced [NADPH--hemoprotein reductase] + O2 = an alcohol + oxidized [NADPH--hemoprotein reductase] + H2O + H(+). Functionally, cytochromes P450 are a group of heme-thiolate monooxygenases. They oxidize a variety of structurally unrelated compounds, including steroids, fatty acids, and xenobiotics. The polypeptide is Cytochrome P450 1A1 (cyp1a1) (Sparus aurata (Gilthead sea bream)).